The primary structure comprises 125 residues: Large ribosomal subunit protein bL12 (125 aa).

Residues 95-125 (APKPIKEGVDKKTAEEAKKKLEEAGAKAELK) are disordered.

Belongs to the bacterial ribosomal protein bL12 family. As to quaternary structure, homodimer. Part of the ribosomal stalk of the 50S ribosomal subunit. Forms a multimeric L10(L12)X complex, where L10 forms an elongated spine to which 2 to 4 L12 dimers bind in a sequential fashion. Binds GTP-bound translation factors.

Its function is as follows. Forms part of the ribosomal stalk which helps the ribosome interact with GTP-bound translation factors. Is thus essential for accurate translation. In Polynucleobacter necessarius subsp. necessarius (strain STIR1), this protein is Large ribosomal subunit protein bL12.